A 120-amino-acid polypeptide reads, in one-letter code: Dihydroneopterin aldolase (120 aa).

2 residues coordinate substrate: E20 and M114.

This sequence belongs to the archaeal dihydroneopterin aldolase family. As to quaternary structure, homotetramer.

It catalyses the reaction 7,8-dihydroneopterin = 6-hydroxymethyl-7,8-dihydropterin + glycolaldehyde. Its function is as follows. Catalyzes the conversion of 7,8-dihydroneopterin (H2Neo) to 6-hydroxymethyl-7,8-dihydropterin (6-HMD). The protein is Dihydroneopterin aldolase of Picrophilus torridus (strain ATCC 700027 / DSM 9790 / JCM 10055 / NBRC 100828 / KAW 2/3).